The primary structure comprises 420 residues: Tyrosine-protein phosphatase non-receptor type 20 (420 aa).

Positions 1 to 11 (MSSPRDFRAEP) are enriched in basic and acidic residues. 2 disordered regions span residues 1-47 (MSSP…VFEN) and 68-108 (DVFE…SQAL). The segment covering 31–41 (LPSSSQENTPR) has biased composition (polar residues). Phosphoserine is present on residues Ser-76 and Ser-120. The Tyrosine-protein phosphatase domain maps to 159–412 (IMQEFMALEL…HFCYDIVLEV (254 aa)). Substrate-binding positions include Asp-323, 353-359 (CSAGIGR), and Gln-397. Cys-353 (phosphocysteine intermediate) is an active-site residue.

The protein belongs to the protein-tyrosine phosphatase family. Non-receptor class subfamily. As to expression, present in many cell lines (at protein level). Widely expressed.

It is found in the nucleus. The protein localises to the cytoplasm. The protein resides in the cytoskeleton. It localises to the microtubule organizing center. Its subcellular location is the centrosome. It carries out the reaction O-phospho-L-tyrosyl-[protein] + H2O = L-tyrosyl-[protein] + phosphate. In terms of biological role, tyrosine-protein phosphatase targeted to sites of actin polymerization in response of varied extracellular stimuli. Has tyrosine phosphatase activity towards various tyrosyl phosphorylated substrates. The chain is Tyrosine-protein phosphatase non-receptor type 20 from Homo sapiens (Human).